The primary structure comprises 239 residues: Myogenic factor 6 (239 aa).

Residues 28-64 form a disordered region; the sequence is HLDMSGVSPLYNGNDSPLSPGQDNVPSETGGESSGDE. Residues 38-58 show a composition bias toward polar residues; that stretch reads YNGNDSPLSPGQDNVPSETGG. A bHLH domain is found at 96–147; that stretch reads DRRKAATLRERRRLKKINEAFDALKRKTVANPNQRLPKVEILRSAISYIERL. The interval 155–189 is disordered; that stretch reads DEQERSQSGASDTRNDKEQNRPSGGDYRWKKASNT.

In terms of assembly, efficient DNA binding requires dimerization with another bHLH protein.

Its subcellular location is the nucleus. Functionally, involved in muscle differentiation (myogenic factor). Induces fibroblasts to differentiate into myoblasts. Probable sequence specific DNA-binding protein. The sequence is that of Myogenic factor 6 (myf6) from Takifugu rubripes (Japanese pufferfish).